A 299-amino-acid chain; its full sequence is ATP phosphoribosyltransferase (299 aa).

This sequence belongs to the ATP phosphoribosyltransferase family. Long subfamily. Equilibrium between an active dimeric form, an inactive hexameric form and higher aggregates. Interconversion between the various forms is largely reversible and is influenced by the natural substrates and inhibitors of the enzyme. The cofactor is Mg(2+).

Its subcellular location is the cytoplasm. It carries out the reaction 1-(5-phospho-beta-D-ribosyl)-ATP + diphosphate = 5-phospho-alpha-D-ribose 1-diphosphate + ATP. It functions in the pathway amino-acid biosynthesis; L-histidine biosynthesis; L-histidine from 5-phospho-alpha-D-ribose 1-diphosphate: step 1/9. Its activity is regulated as follows. Feedback inhibited by histidine. Catalyzes the condensation of ATP and 5-phosphoribose 1-diphosphate to form N'-(5'-phosphoribosyl)-ATP (PR-ATP). Has a crucial role in the pathway because the rate of histidine biosynthesis seems to be controlled primarily by regulation of HisG enzymatic activity. This Pectobacterium carotovorum subsp. carotovorum (strain PC1) protein is ATP phosphoribosyltransferase.